The primary structure comprises 585 residues: Arginine--tRNA ligase (585 aa).

Residues 131 to 141 (ANPTGPMHVGH) carry the 'HIGH' region motif.

This sequence belongs to the class-I aminoacyl-tRNA synthetase family. Monomer.

The protein localises to the cytoplasm. It catalyses the reaction tRNA(Arg) + L-arginine + ATP = L-arginyl-tRNA(Arg) + AMP + diphosphate. This is Arginine--tRNA ligase from Brucella canis (strain ATCC 23365 / NCTC 10854 / RM-666).